A 287-amino-acid chain; its full sequence is Homoserine kinase (287 aa).

78 to 88 provides a ligand contact to ATP; that stretch reads PLSRGLGSSST.

Belongs to the GHMP kinase family. Homoserine kinase subfamily.

It is found in the cytoplasm. The enzyme catalyses L-homoserine + ATP = O-phospho-L-homoserine + ADP + H(+). It functions in the pathway amino-acid biosynthesis; L-threonine biosynthesis; L-threonine from L-aspartate: step 4/5. Catalyzes the ATP-dependent phosphorylation of L-homoserine to L-homoserine phosphate. The polypeptide is Homoserine kinase (Lactobacillus gasseri (strain ATCC 33323 / DSM 20243 / BCRC 14619 / CIP 102991 / JCM 1131 / KCTC 3163 / NCIMB 11718 / NCTC 13722 / AM63)).